The primary structure comprises 340 residues: MTVQMEYEKDVKVAALDGKKIAVIGYGSQGHAHAQNLRDSGRDVIIGVRPGKSFDKAKEDGFDTYTVVEATKLADVIMILAPDEIQQELYEAEIAPNLEAGNAVGFAHGFNIHFEFIKVPADVDVFMCAPKGPGHLVRRTYEEGFGVPALYAVYQDATGNAKNIAMDWCKGVGAARVGLLETTYKEETEEDLFGEQAVLCGGLTALIEAGFEVLTEAGYAPELAYFEVLHEMKLIVDLIYEGGFKKMRQSISNTAEYGDYVSGPRVITEQVKENMKAVLADIQNGKFANDFVNDYKAGRPKLTAYREQAANLEIEKVGAELRKAMPFVGKNDDDAFKIYN.

The 180-residue stretch at 3-182 (VQMEYEKDVK…GAARVGLLET (180 aa)) folds into the KARI N-terminal Rossmann domain. NADP(+) contacts are provided by residues 26–29 (YGSQ), arginine 49, serine 53, and 83–86 (DEIQ). Histidine 108 is a catalytic residue. Glycine 134 is a binding site for NADP(+). In terms of domain architecture, KARI C-terminal knotted spans 183-328 (TYKEETEEDL…AELRKAMPFV (146 aa)). Mg(2+)-binding residues include aspartate 191, glutamate 195, glutamate 227, and glutamate 231. Residue serine 252 participates in substrate binding.

The protein belongs to the ketol-acid reductoisomerase family. Requires Mg(2+) as cofactor.

It carries out the reaction (2R)-2,3-dihydroxy-3-methylbutanoate + NADP(+) = (2S)-2-acetolactate + NADPH + H(+). The enzyme catalyses (2R,3R)-2,3-dihydroxy-3-methylpentanoate + NADP(+) = (S)-2-ethyl-2-hydroxy-3-oxobutanoate + NADPH + H(+). It participates in amino-acid biosynthesis; L-isoleucine biosynthesis; L-isoleucine from 2-oxobutanoate: step 2/4. Its pathway is amino-acid biosynthesis; L-valine biosynthesis; L-valine from pyruvate: step 2/4. Its function is as follows. Involved in the biosynthesis of branched-chain amino acids (BCAA). Catalyzes an alkyl-migration followed by a ketol-acid reduction of (S)-2-acetolactate (S2AL) to yield (R)-2,3-dihydroxy-isovalerate. In the isomerase reaction, S2AL is rearranged via a Mg-dependent methyl migration to produce 3-hydroxy-3-methyl-2-ketobutyrate (HMKB). In the reductase reaction, this 2-ketoacid undergoes a metal-dependent reduction by NADPH to yield (R)-2,3-dihydroxy-isovalerate. This is Ketol-acid reductoisomerase (NADP(+)) from Streptococcus pneumoniae (strain Hungary19A-6).